We begin with the raw amino-acid sequence, 272 residues long: Tryptophan synthase alpha chain (272 aa).

Active-site proton acceptor residues include Glu49 and Glu60.

It belongs to the TrpA family. In terms of assembly, tetramer of two alpha and two beta chains.

It carries out the reaction (1S,2R)-1-C-(indol-3-yl)glycerol 3-phosphate + L-serine = D-glyceraldehyde 3-phosphate + L-tryptophan + H2O. Its pathway is amino-acid biosynthesis; L-tryptophan biosynthesis; L-tryptophan from chorismate: step 5/5. Its function is as follows. The alpha subunit is responsible for the aldol cleavage of indoleglycerol phosphate to indole and glyceraldehyde 3-phosphate. The protein is Tryptophan synthase alpha chain of Legionella pneumophila subsp. pneumophila (strain Philadelphia 1 / ATCC 33152 / DSM 7513).